The following is a 41-amino-acid chain: Inducible serine protease inhibitor 3 (41 aa).

In terms of biological role, inhibits trypsin and the toxin proteases PR1 and PR2 of M.anisopliae. Does not inhibit chymotrypsin, subtilisin Carlsberg, proteinase K and porcine pancreatic elastase. This chain is Inducible serine protease inhibitor 3, found in Galleria mellonella (Greater wax moth).